A 170-amino-acid polypeptide reads, in one-letter code: Peptide deformylase (170 aa).

Fe cation contacts are provided by cysteine 91 and histidine 133. Glutamate 134 is a catalytic residue. Residue histidine 137 coordinates Fe cation.

This sequence belongs to the polypeptide deformylase family. Fe(2+) is required as a cofactor.

The enzyme catalyses N-terminal N-formyl-L-methionyl-[peptide] + H2O = N-terminal L-methionyl-[peptide] + formate. Functionally, removes the formyl group from the N-terminal Met of newly synthesized proteins. Requires at least a dipeptide for an efficient rate of reaction. N-terminal L-methionine is a prerequisite for activity but the enzyme has broad specificity at other positions. The protein is Peptide deformylase of Pectobacterium carotovorum subsp. carotovorum (strain PC1).